A 336-amino-acid chain; its full sequence is m7GpppX diphosphatase (336 aa).

Residues 1–36 form a disordered region; that stretch reads MADTAPQLKRKREQEAEEAETPSTEEKEAGVGNGTS. N-acetylalanine is present on Ala2. The short motif at 9–12 is the nuclear localization signal (NLS) element; that stretch reads KRKR. Ser23 bears the Phosphoserine mark. Lys137 and Lys141 each carry N6-acetyllysine. A nuclear export sequence (NES) motif is present at residues 141 to 153; sequence KYMRQDLRLIRET. Substrate contacts are provided by residues Trp174, Glu184, Asp204, Lys206, and 267 to 278; that span reads HYLPSYYHLHVH. The short motif at 274 to 278 is the Histidine triad motif element; it reads HLHVH. His276 functions as the Nucleophile in the catalytic mechanism.

Belongs to the HIT family. As to quaternary structure, homodimer. Associates with components of the exosome multienzyme ribonuclease complex, such as EXOSC3 and EXOSC4. Interacts with NDOR1.

It localises to the cytoplasm. Its subcellular location is the nucleus. It carries out the reaction a 5'-end (N(7)-methyl 5'-triphosphoguanosine)-ribonucleoside in mRNA + H2O = N(7)-methyl-GMP + a 5'-end diphospho-ribonucleoside in mRNA + 2 H(+). Its activity is regulated as follows. The hydrolytic product 7-methylguanosine diphosphate (m7GDP) efficiently inhibits the decapping scavenger activity and acts as a competitive inhibitor in vitro. Inhibited by 2,4-diaminoquinazoline. In terms of biological role, decapping scavenger enzyme that catalyzes the cleavage of a residual cap structure following the degradation of mRNAs by the 3'-&gt;5' exosome-mediated mRNA decay pathway. Hydrolyzes cap analog structures like 7-methylguanosine nucleoside triphosphate (m7GpppG) with up to 10 nucleotide substrates (small capped oligoribonucleotides) and specifically releases 5'-phosphorylated RNA fragments and 7-methylguanosine monophosphate (m7GMP). Cleaves cap analog structures like tri-methyl guanosine nucleoside triphosphate (m3(2,2,7)GpppG) with very poor efficiency. Does not hydrolyze unmethylated cap analog (GpppG) and shows no decapping activity on intact m7GpppG-capped mRNA molecules longer than 25 nucleotides. Does not hydrolyze 7-methylguanosine diphosphate (m7GDP) to m7GMP. May also play a role in the 5'-&gt;3 mRNA decay pathway; m7GDP, the downstream product released by the 5'-&gt;3' mRNA mediated decapping activity, may be also converted by DCPS to m7GMP. Binds to m7GpppG and strongly to m7GDP. Plays a role in first intron splicing of pre-mRNAs. Inhibits activation-induced cell death. This is m7GpppX diphosphatase (Dcps) from Rattus norvegicus (Rat).